Here is a 683-residue protein sequence, read N- to C-terminus: Pre-mRNA-splicing factor CLF1 (683 aa).

HAT repeat units follow at residues 40–72 (DWQR…FEYE), 74–106 (RDMR…CELR), 108–140 (RDVN…MEES), 142–173 (GQVE…FETR), 175–206 (GQVE…FERK), 291–323 (SILF…LLEE), 336–367 (ATVK…FLET), 374–407 (LTRS…FEIR), 409–440 (EKLD…LEIK), 442–474 (KEFD…LEEN), 476–513 (GDED…FETD), 515–547 (SEFE…YESS), and 582–620 (ENKE…YESI).

Belongs to the crooked-neck family. Associated with the spliceosome.

The protein resides in the nucleus. Functionally, involved in pre-mRNA splicing and cell cycle progression. Required for the spliceosome assembly and initiation of the DNA replication. The protein is Pre-mRNA-splicing factor CLF1 (CLF1) of Eremothecium gossypii (strain ATCC 10895 / CBS 109.51 / FGSC 9923 / NRRL Y-1056) (Yeast).